The sequence spans 380 residues: Chorismate synthase (380 aa).

R48 provides a ligand contact to NADP(+). FMN is bound by residues 126–128 (HFS), G300, 315–319 (KPISS), and R342.

This sequence belongs to the chorismate synthase family. As to quaternary structure, homotetramer. FMNH2 is required as a cofactor.

It carries out the reaction 5-O-(1-carboxyvinyl)-3-phosphoshikimate = chorismate + phosphate. It participates in metabolic intermediate biosynthesis; chorismate biosynthesis; chorismate from D-erythrose 4-phosphate and phosphoenolpyruvate: step 7/7. Its function is as follows. Catalyzes the anti-1,4-elimination of the C-3 phosphate and the C-6 proR hydrogen from 5-enolpyruvylshikimate-3-phosphate (EPSP) to yield chorismate, which is the branch point compound that serves as the starting substrate for the three terminal pathways of aromatic amino acid biosynthesis. This reaction introduces a second double bond into the aromatic ring system. In Lancefieldella parvula (strain ATCC 33793 / DSM 20469 / CCUG 32760 / JCM 10300 / KCTC 3663 / VPI 0546 / 1246) (Atopobium parvulum), this protein is Chorismate synthase.